Here is a 491-residue protein sequence, read N- to C-terminus: UDP-N-acetylmuramate--L-alanine ligase (491 aa).

126-132 (GTHGKTT) is an ATP binding site.

Belongs to the MurCDEF family.

The protein resides in the cytoplasm. The catalysed reaction is UDP-N-acetyl-alpha-D-muramate + L-alanine + ATP = UDP-N-acetyl-alpha-D-muramoyl-L-alanine + ADP + phosphate + H(+). The protein operates within cell wall biogenesis; peptidoglycan biosynthesis. Functionally, cell wall formation. In Escherichia coli (strain SMS-3-5 / SECEC), this protein is UDP-N-acetylmuramate--L-alanine ligase.